Consider the following 130-residue polypeptide: Endoglucanase 2 (130 aa).

Catalysis depends on residues His47, Asp98, and Glu107.

Belongs to the glycosyl hydrolase 9 (cellulase E) family.

The enzyme catalyses Endohydrolysis of (1-&gt;4)-beta-D-glucosidic linkages in cellulose, lichenin and cereal beta-D-glucans.. Its function is as follows. Involved in ripening fruit process. In Persea americana (Avocado), this protein is Endoglucanase 2 (CEL2).